We begin with the raw amino-acid sequence, 460 residues long: ATP synthase subunit beta (460 aa).

ATP is bound at residue 150-157 (GGAGVGKT).

Belongs to the ATPase alpha/beta chains family. As to quaternary structure, F-type ATPases have 2 components, CF(1) - the catalytic core - and CF(0) - the membrane proton channel. CF(1) has five subunits: alpha(3), beta(3), gamma(1), delta(1), epsilon(1). CF(0) has three main subunits: a(1), b(2) and c(9-12). The alpha and beta chains form an alternating ring which encloses part of the gamma chain. CF(1) is attached to CF(0) by a central stalk formed by the gamma and epsilon chains, while a peripheral stalk is formed by the delta and b chains.

It is found in the cell inner membrane. The catalysed reaction is ATP + H2O + 4 H(+)(in) = ADP + phosphate + 5 H(+)(out). Its function is as follows. Produces ATP from ADP in the presence of a proton gradient across the membrane. The catalytic sites are hosted primarily by the beta subunits. In Shigella dysenteriae serotype 1 (strain Sd197), this protein is ATP synthase subunit beta.